The sequence spans 347 residues: NADH-quinone oxidoreductase subunit H (347 aa).

9 helical membrane-spanning segments follow: residues 13–33 (LLILLKSVALIVILLVGVAYI), 50–70 (PNVVGPWGLFQAFADLFKFVF), 82–102 (GVFLLAPVVAAGLALAAWAVI), 115–135 (VGILYVFAIASLEVYGVIMAG), 161–181 (IGFVIVTVLLAVGSLNLTDIV), 198–218 (FLDWHWLALFPMFIIFFISAL), 248–268 (FLLFFLGEYVAIVLMCALTTI), 286–306 (VPGVVWFVLKLVAVFFMFALV), and 321–341 (LGWKVFLPISLFMVVATAAFL).

This sequence belongs to the complex I subunit 1 family. NDH-1 is composed of 14 different subunits. Subunits NuoA, H, J, K, L, M, N constitute the membrane sector of the complex.

Its subcellular location is the cell inner membrane. The enzyme catalyses a quinone + NADH + 5 H(+)(in) = a quinol + NAD(+) + 4 H(+)(out). Functionally, NDH-1 shuttles electrons from NADH, via FMN and iron-sulfur (Fe-S) centers, to quinones in the respiratory chain. The immediate electron acceptor for the enzyme in this species is believed to be ubiquinone. Couples the redox reaction to proton translocation (for every two electrons transferred, four hydrogen ions are translocated across the cytoplasmic membrane), and thus conserves the redox energy in a proton gradient. This subunit may bind ubiquinone. The protein is NADH-quinone oxidoreductase subunit H of Chelativorans sp. (strain BNC1).